The primary structure comprises 70 residues: Prokaryotic ubiquitin-like protein UBact (70 aa).

Composition is skewed to basic and acidic residues over residues 1-15 and 24-50; these read MPDQ…RKQG and TRHD…RDPG. A disordered region spans residues 1 to 70; the sequence is MPDQRQQERS…RQQRREQSGE (70 aa). E70 participates in a covalent cross-link: Isoglutamyl lysine isopeptide (Glu-Lys) (interchain with K-? in acceptor proteins).

Belongs to the ubiquitin-like protein UBact family.

Functionally, may function as a protein modifier covalently attached to lysine residues of substrate proteins. This may serve to target the modified proteins for degradation by proteasomes. This is Prokaryotic ubiquitin-like protein UBact from Terrybacteria sp. (strain RIFCSPHIGHO2_01_FULL_58_15).